Here is a 98-residue protein sequence, read N- to C-terminus: NADH-ubiquinone oxidoreductase chain 4L (98 aa).

3 consecutive transmembrane segments (helical) span residues 1-21, 29-49, and 61-81; these read MPFIYINVLLAYFMSLLGLLI, SLLCLEGMMLSLFIMATLMTL, and IVLLVFAACEAAVGLALLVLI.

This sequence belongs to the complex I subunit 4L family. As to quaternary structure, core subunit of respiratory chain NADH dehydrogenase (Complex I) which is composed of 45 different subunits.

Its subcellular location is the mitochondrion inner membrane. The catalysed reaction is a ubiquinone + NADH + 5 H(+)(in) = a ubiquinol + NAD(+) + 4 H(+)(out). In terms of biological role, core subunit of the mitochondrial membrane respiratory chain NADH dehydrogenase (Complex I) which catalyzes electron transfer from NADH through the respiratory chain, using ubiquinone as an electron acceptor. Part of the enzyme membrane arm which is embedded in the lipid bilayer and involved in proton translocation. In Aotus trivirgatus (Three-striped night monkey), this protein is NADH-ubiquinone oxidoreductase chain 4L (MT-ND4L).